Consider the following 1134-residue polypeptide: Early transcription factor large subunit homolog (1134 aa).

Residues 52–352 (KGGRAFFPCD…PNGQPLQRQQ (301 aa)) form the Helicase ATP-binding domain. Position 99 to 106 (99 to 106 (WQTGTGKS)) interacts with ATP. The DEAH box signature appears at 281–284 (DEIH). The Helicase C-terminal domain maps to 524–725 (MMKDILSIIR…EGDKALRKHA (202 aa)).

This sequence belongs to the DEAD box helicase family. DEAH subfamily.

Its subcellular location is the virion. It carries out the reaction ATP + H2O = ADP + phosphate + H(+). Its function is as follows. Putative initation factor. The polypeptide is Early transcription factor large subunit homolog (African swine fever virus (isolate Pig/Kenya/KEN-50/1950) (ASFV)).